The following is a 489-amino-acid chain: Inositol-pentakisphosphate 2-kinase (489 aa).

The short motif at 136-140 (EIKPK) is the EXKPK motif element.

This sequence belongs to the IPK1 type 2 family.

It localises to the cytoplasm. Its subcellular location is the nucleus. The catalysed reaction is 1D-myo-inositol 1,3,4,5,6-pentakisphosphate + ATP = 1D-myo-inositol hexakisphosphate + ADP + H(+). Phosphorylates Ins(1,3,4,5,6)P5 at position 2 to form Ins(1,2,3,4,5,6)P6 (InsP6 or phytate). InsP6 is involved in many processes such as mRNA export, non-homologous end-joining, endocytosis, ion channel regulation. It also protects cells from TNF-alpha-induced apoptosis. The chain is Inositol-pentakisphosphate 2-kinase (Ippk) from Rattus norvegicus (Rat).